Consider the following 186-residue polypeptide: MAMTAASVFGSGGCLELLTSSKAMRGKLWTRLAPFISKRHASTSQTSLSSSSSSCSVINPWLFVGLGNPGEKYQCTRHNVGFDMIDMFAQSQGISLTRHPFKALFGEGMVEGVPVLLAKPQTYMNLSGESVGPLAAYYKLPLNRVLVAFDDMDLPCGVLRLQPKGGYGRHNGSVDFIIMCFNEVIC.

The N-terminal 49 residues, 1 to 49 (MAMTAASVFGSGGCLELLTSSKAMRGKLWTRLAPFISKRHASTSQTSLS), are a transit peptide targeting the chloroplast. Residue Tyr-73 coordinates tRNA. The active-site Proton acceptor is His-78. TRNA-binding residues include Tyr-123, Asn-125, and Asn-171.

The protein belongs to the PTH family.

Its subcellular location is the plastid. It localises to the chloroplast. The chain is CRS2-like protein, chloroplastic from Oryza sativa subsp. japonica (Rice).